Consider the following 417-residue polypeptide: Aminoacyltransferase FemA (417 aa).

Belongs to the FemABX family.

The protein localises to the cytoplasm. The enzyme catalyses beta-D-GlcNAc-(1-&gt;4)-Mur2Ac(oyl-L-Ala-D-isoglutaminyl-L-Lys-(N(6)-Gly)-D-Ala-D-Ala)-di-trans,octa-cis-undecaprenyl diphosphate + 2 glycyl-tRNA(Gly) = MurNAc-L-Ala-D-isoglutaminyl-L-Lys-(N(6)-tri-Gly)-D-Ala-D-Ala-diphospho-di-trans,octa-cis-undecaprenyl-GlcNAc + 2 tRNA(Gly) + 2 H(+). Catalyzes the incorporation of amino acid(s) into the interchain peptide bridge of peptidoglycan, using aminoacyl-tRNA as amino acid donor. The sequence is that of Aminoacyltransferase FemA (femA) from Staphylococcus epidermidis (strain ATCC 35984 / DSM 28319 / BCRC 17069 / CCUG 31568 / BM 3577 / RP62A).